The chain runs to 375 residues: Lipid-A-disaccharide synthase (375 aa).

This sequence belongs to the LpxB family.

The enzyme catalyses a lipid X + a UDP-2-N,3-O-bis[(3R)-3-hydroxyacyl]-alpha-D-glucosamine = a lipid A disaccharide + UDP + H(+). Its pathway is bacterial outer membrane biogenesis; LPS lipid A biosynthesis. Its function is as follows. Condensation of UDP-2,3-diacylglucosamine and 2,3-diacylglucosamine-1-phosphate to form lipid A disaccharide, a precursor of lipid A, a phosphorylated glycolipid that anchors the lipopolysaccharide to the outer membrane of the cell. The chain is Lipid-A-disaccharide synthase from Pseudomonas putida (strain ATCC 47054 / DSM 6125 / CFBP 8728 / NCIMB 11950 / KT2440).